We begin with the raw amino-acid sequence, 728 residues long: Glycine--tRNA ligase (728 aa).

Residues 1-32 (MPCLLPTLLRATRAALLLQSPRVVAAPASQRL) constitute a mitochondrion transit peptide. The WHEP-TRS domain occupies 52–108 (LLAPLRLAVRQQGDFVRKLKEDKAPQVDVDRAVAELKARKRVLEAKELALQPKDDIV). Lys193 carries the post-translational modification N6-acetyllysine. Position 288 (Glu288) interacts with glycine. Residues 320 to 322 (RNE) and 331 to 332 (RV) each bind ATP. Glu339 contacts glycine. Residue Tyr442 is modified to Phosphotyrosine. An ATP-binding site is contributed by 446–447 (EI). Residue Lys490 is modified to N6-acetyllysine. A glycine-binding site is contributed by 565 to 567 (EPS). Arg572 is an ATP binding site. Ser689 carries the post-translational modification Phosphoserine. Thr725 is modified (phosphothreonine).

Belongs to the class-II aminoacyl-tRNA synthetase family. As to quaternary structure, homodimer.

It localises to the cytoplasm. The protein resides in the mitochondrion. It is found in the cell projection. The protein localises to the axon. Its subcellular location is the secreted. It localises to the extracellular exosome. The enzyme catalyses tRNA(Gly) + glycine + ATP = glycyl-tRNA(Gly) + AMP + diphosphate. The catalysed reaction is 2 ATP + H(+) = P(1),P(4)-bis(5'-adenosyl) tetraphosphate + diphosphate. Catalyzes the ATP-dependent ligation of glycine to the 3'-end of its cognate tRNA, via the formation of an aminoacyl-adenylate intermediate (Gly-AMP). Also produces diadenosine tetraphosphate (Ap4A), a universal pleiotropic signaling molecule needed for cell regulation pathways, by direct condensation of 2 ATPs. Thereby, may play a special role in Ap4A homeostasis. The protein is Glycine--tRNA ligase (Gars1) of Rattus norvegicus (Rat).